The sequence spans 259 residues: Indole-3-glycerol phosphate synthase (259 aa).

Belongs to the TrpC family.

The enzyme catalyses 1-(2-carboxyphenylamino)-1-deoxy-D-ribulose 5-phosphate + H(+) = (1S,2R)-1-C-(indol-3-yl)glycerol 3-phosphate + CO2 + H2O. It functions in the pathway amino-acid biosynthesis; L-tryptophan biosynthesis; L-tryptophan from chorismate: step 4/5. In Dehalococcoides mccartyi (strain ATCC BAA-2266 / KCTC 15142 / 195) (Dehalococcoides ethenogenes (strain 195)), this protein is Indole-3-glycerol phosphate synthase.